Reading from the N-terminus, the 912-residue chain is MAPLFLPLLATLVLAWIPVALADALEGDSSEDRAFRVRIAGDAPLQGVLGGALTIPCHVHYLRPSPSRRAAQGSPRVKWTFLSGGREAEVLVARGLRVKVSEAYRFRVALPAYPASLTDVSLVLSELRPNDSGIYRCEVQHGIDDSSDAVEVKVKGVVFLYREGSARYAFSFAGAQEACARIGARIATPEQLYAAYLGGYEQCDAGWLSDQTVRYPIQTPREACYGDMDGFPGVRNYGVVDPDDLYDVYCYAEELNGELFLGAPPDKLTLEEARTYCQERGAKIATTGQLYAAWDGGLDRCSSGWLSDGSVRYPIVTPSQRCGGGLPGVKTLFLFPNQTGFPNKHSRFNVYCFRDSAQPSAIPEAANPASHLASDALEAIVTVTETLEELKLPQEAVESESRGAIYSIPIIEDGGGGSSTPEDPAEAPRTLLEFETQSIVPPLGSSEEEGKVLEQEEKYRGEEEKEEEEEEEEVEDEALWAWPSELSSLDPEAPLPTEPVPEESLTQASPPVRAALQPGVSPPPYDEPEAPRPPRVLGPPTKTLPTPREGNLASPPPSTLVGAREIEEETGGPELSGAPRGESEETGSSEDAPSLLPATRAPGDTRDLETPSEENSRRTVPAGTSVRAQPVLPTDSASRGGVAVAPSSGDCVPSPCHNGGTCLEEEEGVRCLCLPGYGGDLCDVGLHFCSPGWDAFQGACYKHFSARRSWEEAENKCRMYGAHLASISTPEEQDFINNRYREYQWIGLNDRTIEGDFLWSDGVPLLYENWNPGQPDSYFLSGENCVVMVWHDQGQWSDVPCNYHLSYTCKMGLVSCGPPPELPLAEVFGRPRLRYEVDTVLRYRCREGLTQRNLPLIRCQENGRWGLPQISCVPRRPARALRPVEAQEGRPWRLVGHWKARLNPSPNPAPGP.

Positions 1-22 (MAPLFLPLLATLVLAWIPVALA) are cleaved as a signal peptide. The Ig-like V-type domain maps to 36 to 155 (RVRIAGDAPL…SSDAVEVKVK (120 aa)). Cystine bridges form between Cys57–Cys137, Cys179–Cys250, Cys203–Cys224, Cys277–Cys352, and Cys301–Cys322. Asn130 carries N-linked (GlcNAc...) asparagine glycosylation. 2 Link domains span residues 157 to 252 (VVFL…YCYA) and 257 to 354 (GELF…YCFR). A glycan (N-linked (GlcNAc...) asparagine) is linked at Asn337. Disordered stretches follow at residues 408–427 (IPII…PAEA) and 438–651 (SIVP…SGDC). At Ser418 the chain carries Phosphoserine. Ser418 is a glycosylation site (O-linked (Xyl...) (chondroitin sulfate) serine). Positions 448–463 (EEGKVLEQEEKYRGEE) are enriched in basic and acidic residues. The span at 464-478 (EKEEEEEEEEVEDEA) shows a compositional bias: acidic residues. Pro residues predominate over residues 520-537 (VSPPPYDEPEAPRPPRVL). Over residues 603–617 (GDTRDLETPSEENSR) the composition is skewed to basic and acidic residues. Positions 647–683 (SSGDCVPSPCHNGGTCLEEEEGVRCLCLPGYGGDLCD) constitute an EGF-like domain. 8 cysteine pairs are disulfide-bonded: Cys651/Cys662, Cys656/Cys671, Cys673/Cys682, Cys689/Cys700, Cys717/Cys809, Cys785/Cys801, Cys816/Cys859, and Cys845/Cys872. The region spanning 683-811 (DVGLHFCSPG…NYHLSYTCKM (129 aa)) is the C-type lectin domain. A Sushi domain is found at 814–874 (VSCGPPPELP…WGLPQISCVP (61 aa)).

It belongs to the aggrecan/versican proteoglycan family. As to quaternary structure, interacts with TNR. O-glycosylated; contains chondroitin sulfate. In terms of tissue distribution, brain; expressed in cerebellar astrocytes but not in neurons.

Its subcellular location is the secreted. It localises to the extracellular space. The protein localises to the extracellular matrix. May play a role in the terminally differentiating and the adult nervous system during postnatal development. Could stabilize interactions between hyaluronan (HA) and brain proteoglycans. This is Brevican core protein (BCAN) from Bos taurus (Bovine).